The following is a 428-amino-acid chain: D-amino acid dehydrogenase (428 aa).

3–17 is an FAD binding site; it reads VVILGSGVVGVASAY.

Belongs to the DadA oxidoreductase family. FAD serves as cofactor.

It carries out the reaction a D-alpha-amino acid + A + H2O = a 2-oxocarboxylate + AH2 + NH4(+). It participates in amino-acid degradation; D-alanine degradation; NH(3) and pyruvate from D-alanine: step 1/1. Oxidative deamination of D-amino acids. The polypeptide is D-amino acid dehydrogenase (Burkholderia multivorans (strain ATCC 17616 / 249)).